We begin with the raw amino-acid sequence, 726 residues long: Catalase-peroxidase (726 aa).

The interval 1–34 (MSMSDDTHNSLSTGKCPFHQGSHDRSAGAGTSSH) is disordered. The tryptophyl-tyrosyl-methioninium (Trp-Tyr) (with M-252) cross-link spans 105–226 (WHGAGTYRSV…LGATEMGLIY (122 aa)). His-106 (proton acceptor) is an active-site residue. Residues 226 to 252 (YVNPEGPDHSGEPLSAAAAIRATFGNM) constitute a cross-link (tryptophyl-tyrosyl-methioninium (Tyr-Met) (with W-105)). A heme b-binding site is contributed by His-267.

This sequence belongs to the peroxidase family. Peroxidase/catalase subfamily. Homodimer or homotetramer. The cofactor is heme b. Formation of the three residue Trp-Tyr-Met cross-link is important for the catalase, but not the peroxidase activity of the enzyme.

The enzyme catalyses H2O2 + AH2 = A + 2 H2O. It catalyses the reaction 2 H2O2 = O2 + 2 H2O. Bifunctional enzyme with both catalase and broad-spectrum peroxidase activity. This chain is Catalase-peroxidase, found in Citrobacter koseri (strain ATCC BAA-895 / CDC 4225-83 / SGSC4696).